A 115-amino-acid chain; its full sequence is Promotilin (115 aa).

An N-terminal signal peptide occupies residues 1–25 (MVSRKAVAALLVVHVAAMLASQTEA). Residues 39 to 72 (QEKERNKGQKKSLSVWQRSGEEGPVDPAEPIREE) form a disordered region.

Belongs to the motilin family.

The protein localises to the secreted. Its function is as follows. Plays an important role in the regulation of interdigestive gastrointestinal motility and indirectly causes rhythmic contraction of duodenal and colonic smooth muscle. This Homo sapiens (Human) protein is Promotilin (MLN).